A 411-amino-acid chain; its full sequence is Class E basic helix-loop-helix protein 40 (411 aa).

The segment at 1–21 (MERIPSAQPPPTCLPKTPGLE) is disordered. Positions 1 to 139 (MERIPSAQPP…LSGKNIEAGQ (139 aa)) are essential for interaction with BMAL1, E-box binding and repressor activity against the CLOCK-BMAL1 heterodimer. In terms of domain architecture, bHLH spans 52–107 (TYKLPHRLIEKKRRDRINECIAQLKDLLPEHLKLTTLGHLEKAVVLELTLKHVKAL). The segment at 75–79 (LKDLL) is necessary for interaction with RXRA and repressor activity against RXRA. The 34-residue stretch at 142 to 175 (FCSGFQTCAREVLQYLAKHENTRDLKSSQLVTHL) folds into the Orange domain. A Glycyl lysine isopeptide (Lys-Gly) (interchain with G-Cter in SUMO1, SUMO2 and SUMO3) cross-link involves residue Lys-159. Lys-167 participates in a covalent cross-link: Glycyl lysine isopeptide (Lys-Gly) (interchain with G-Cter in SUMO2). The segment at 186 to 293 (SASRKPLDSA…EPPTKKSRMQ (108 aa)) is disordered. Position 235 is a phosphoserine (Ser-235). Residues 248–271 (ELEKGDLRSEQPYFKSDHGRRFTV) show a composition bias toward basic and acidic residues. Residue Lys-279 forms a Glycyl lysine isopeptide (Lys-Gly) (interchain with G-Cter in SUMO1); alternate linkage. Residue Lys-279 forms a Glycyl lysine isopeptide (Lys-Gly) (interchain with G-Cter in SUMO1, SUMO2 and SUMO3); alternate linkage. A Glycyl lysine isopeptide (Lys-Gly) (interchain with G-Cter in SUMO2); alternate cross-link involves residue Lys-279. A Glycyl lysine isopeptide (Lys-Gly) (interchain with G-Cter in SUMO2) cross-link involves residue Lys-288. Ser-383 carries the post-translational modification Phosphoserine.

As to quaternary structure, homodimer. Heterodimer with BHLHE41/DEC2. Interacts with TCF3/E47. Interacts with ubiquitin-conjugating enzyme UBE2I/UBC9. Interacts with HDAC1, SUMO1, RXRA and BMAL1. In terms of processing, ubiquitinated; which may lead to proteasomal degradation. Sumoylation inhibits its ubiquitination and promotes its negative regulation of the CLOCK-BMAL1 heterodimer transcriptional activator activity. Expressed in heart, spleen, lung, liver, muscle, kidney, uterus and gut. Highly expressed in the cerebral cortex, especially in the fifth layer, thalamus, superior colliculus, olfactory bulb, piriform cortex, hippocampus and hypothalamic nuclei.

The protein localises to the cytoplasm. It is found in the nucleus. In terms of biological role, transcriptional repressor involved in the regulation of the circadian rhythm by negatively regulating the activity of the clock genes and clock-controlled genes. Acts as the negative limb of a novel autoregulatory feedback loop (DEC loop) which differs from the one formed by the PER and CRY transcriptional repressors (PER/CRY loop). Both these loops are interlocked as it represses the expression of PER1/2 and in turn is repressed by PER1/2 and CRY1/2. Represses the activity of the circadian transcriptional activator: CLOCK-BMAL1|BMAL2 heterodimer by competing for the binding to E-box elements (5'-CACGTG-3') found within the promoters of its target genes. Negatively regulates its own expression and the expression of DBP and BHLHE41/DEC2. Acts as a corepressor of RXR and the RXR-LXR heterodimers and represses the ligand-induced RXRA and NR1H3/LXRA transactivation activity. May be involved in the regulation of chondrocyte differentiation via the cAMP pathway. Represses the transcription of NR0B2 and attentuates the transactivation of NR0B2 by the CLOCK-BMAL1 complex. Drives the circadian rhythm of blood pressure through transcriptional repression of ATP1B1 in the cardiovascular system. The chain is Class E basic helix-loop-helix protein 40 (Bhlhe40) from Rattus norvegicus (Rat).